The primary structure comprises 707 residues: Methionine--tRNA ligase (707 aa).

Residues 13 to 23 (PYANGNFHIGH) carry the 'HIGH' region motif. 4 residues coordinate Zn(2+): C147, C150, C160, and C163. Residues 344-348 (KMSKS) carry the 'KMSKS' region motif. ATP is bound at residue K347. The tRNA-binding domain occupies 601–707 (DFAKVDLRIA…PGATPGMRIH (107 aa)).

The protein belongs to the class-I aminoacyl-tRNA synthetase family. MetG type 1 subfamily. In terms of assembly, homodimer. Zn(2+) is required as a cofactor.

It is found in the cytoplasm. The catalysed reaction is tRNA(Met) + L-methionine + ATP = L-methionyl-tRNA(Met) + AMP + diphosphate. Is required not only for elongation of protein synthesis but also for the initiation of all mRNA translation through initiator tRNA(fMet) aminoacylation. The sequence is that of Methionine--tRNA ligase from Polaromonas naphthalenivorans (strain CJ2).